The chain runs to 228 residues: Probable U3 small nucleolar RNA-associated protein 11 (228 aa).

Disordered stretches follow at residues 1-23 (MSSL…EARK) and 192-211 (SMQK…DDEL). Residues 12–23 (AHKERSQPEARK) are compositionally biased toward basic and acidic residues.

It belongs to the UTP11 family. In terms of assembly, component of the ribosomal small subunit (SSU) processome.

The protein localises to the nucleus. The protein resides in the nucleolus. Its function is as follows. Involved in nucleolar processing of pre-18S ribosomal RNA. The protein is Probable U3 small nucleolar RNA-associated protein 11 of Arabidopsis thaliana (Mouse-ear cress).